A 119-amino-acid polypeptide reads, in one-letter code: Large ribosomal subunit protein bL20 (119 aa).

This sequence belongs to the bacterial ribosomal protein bL20 family.

Binds directly to 23S ribosomal RNA and is necessary for the in vitro assembly process of the 50S ribosomal subunit. It is not involved in the protein synthesizing functions of that subunit. The sequence is that of Large ribosomal subunit protein bL20 from Halalkalibacterium halodurans (strain ATCC BAA-125 / DSM 18197 / FERM 7344 / JCM 9153 / C-125) (Bacillus halodurans).